Here is a 234-residue protein sequence, read N- to C-terminus: Orotidine 5'-phosphate decarboxylase (234 aa).

Residues Asp-14, Lys-36, 63–72, Thr-123, Arg-184, Gln-193, Gly-213, and Arg-214 contribute to the substrate site; that span reads DLKFHDIPNT. The active-site Proton donor is the Lys-65.

Belongs to the OMP decarboxylase family. Type 1 subfamily. In terms of assembly, homodimer.

The catalysed reaction is orotidine 5'-phosphate + H(+) = UMP + CO2. The protein operates within pyrimidine metabolism; UMP biosynthesis via de novo pathway; UMP from orotate: step 2/2. Its function is as follows. Catalyzes the decarboxylation of orotidine 5'-monophosphate (OMP) to uridine 5'-monophosphate (UMP). The chain is Orotidine 5'-phosphate decarboxylase from Psychromonas ingrahamii (strain DSM 17664 / CCUG 51855 / 37).